The following is a 366-amino-acid chain: Type 2A phosphatase-associated protein 42 (366 aa).

A disordered region spans residues 318-366; the sequence is RVLQGGEEPEQAPDEENMDWQDRETYKAREWDEFKESHAKGSGNTMNRG. The span at 324–336 shows a compositional bias: acidic residues; the sequence is EEPEQAPDEENMD. A compositionally biased stretch (basic and acidic residues) spans 337–356; that stretch reads WQDRETYKAREWDEFKESHA.

It belongs to the IGBP1/TAP42 family. In terms of assembly, associates with the PP2a (PPH21 and PPH22) and SIT4 protein phosphatase catalytic subunits. Interacts with PPG1, PPH3 and TIP41. Post-translationally, phosphorylated by TOR kinases. Dephosphorylated by CDC55, TPD3 and SIT4.

Functionally, involved in negative regulation of the TOR signaling pathway in response to type of available nitrogen source. Inhibitor of PP2A phosphatase SIT4, which results in inhibition of nuclear export of MSN2, due to lack of dephosphorylation by SIT4. Also required for rapamycin induced activation of expression of many nitrogen discrimination pathway (NDP) genes. In complex with PPH21, required for organization of the actin cytoskeletom during the cell cycle via a Rho GTPase-dependent mechanism. In Saccharomyces cerevisiae (strain ATCC 204508 / S288c) (Baker's yeast), this protein is Type 2A phosphatase-associated protein 42 (TAP42).